The sequence spans 1081 residues: WD repeat-containing protein 64 (1081 aa).

WD repeat units follow at residues 102 to 152, 153 to 198, 199 to 265, 266 to 314, 315 to 356, 357 to 400, 401 to 444, 445 to 488, 489 to 532, 533 to 631, 632 to 740, 741 to 803, 804 to 857, and 858 to 895; these read DPIA…ATQK, GLIT…GSSQ, ENYF…VLDS, KNFK…LEDN, LPVR…NIST, KPVG…TLSL, LQVF…TRMI, QDTK…ETGL, QVYQ…FGSG, QEMK…LIVE, RNFS…PQSS, KGSK…EGRL, LKDM…EKKF, and KQLL…RLWH. Residues 726–745 show a composition bias toward low complexity; the sequence is CSSSQCESSKGPQSSKGSKQ. Residues 726–757 are disordered; the sequence is CSSSQCESSKGPQSSKGSKQSIHDSEVKGEQT. Basic and acidic residues predominate over residues 746–756; sequence SIHDSEVKGEQ. Positions 1036–1060 are disordered; that stretch reads DSSDGITGKKKGGHVQREKAPRRRS. Basic residues predominate over residues 1043–1060; sequence GKKKGGHVQREKAPRRRS.

This Homo sapiens (Human) protein is WD repeat-containing protein 64 (WDR64).